The following is a 642-amino-acid chain: Threonine--tRNA ligase (642 aa).

The 61-residue stretch at 1 to 61 (MPVITLPDGS…ETDAELSIIT (61 aa)) folds into the TGS domain. The interval 243–534 (DHRKIGKQLD…LIEEYAGRFP (292 aa)) is catalytic. Residues C334, H385, and H511 each contribute to the Zn(2+) site.

Belongs to the class-II aminoacyl-tRNA synthetase family. Homodimer. Requires Zn(2+) as cofactor.

Its subcellular location is the cytoplasm. The catalysed reaction is tRNA(Thr) + L-threonine + ATP = L-threonyl-tRNA(Thr) + AMP + diphosphate + H(+). Its function is as follows. Catalyzes the attachment of threonine to tRNA(Thr) in a two-step reaction: L-threonine is first activated by ATP to form Thr-AMP and then transferred to the acceptor end of tRNA(Thr). Also edits incorrectly charged L-seryl-tRNA(Thr). The protein is Threonine--tRNA ligase of Shewanella oneidensis (strain ATCC 700550 / JCM 31522 / CIP 106686 / LMG 19005 / NCIMB 14063 / MR-1).